Reading from the N-terminus, the 1517-residue chain is Dual oxidase 2 (1517 aa).

The first 25 residues, 1-25 (MLPTSLKTLVLLGALLTGPLGPAGG), serve as a signal peptide directing secretion. Residues 26–599 (QDAPSLPREV…YFEGSGAGYG (574 aa)) are Extracellular-facing. Residues 30–596 (SLPREVQRYD…VIDYFEGSGA (567 aa)) are peroxidase-like; mediates peroxidase activity. N-linked (GlcNAc...) asparagine glycans are attached at residues Asn100, Asn348, Asn455, and Asn537. Cysteines 124 and 1131 form a disulfide. Residues 600–620 (VTLLAVCCFPVVSLIIAWVVA) traverse the membrane as a helical segment. Residues 621–1010 (RFRNRERKML…KRFVENYRRH (390 aa)) lie on the Cytoplasmic side of the membrane. EF-hand domains follow at residues 819 to 854 (PQDMFVESMFSLADKDGNGYISFREFLDILVVFMKG), 855 to 890 (SPQDKSRLMFTMYDLDGNGFLSKEEFFTMMRSFIEI), and 899 to 934 (QLAEVVESMFRESGFQDKEELTWEDFHFMLRDHDSD). Ca(2+) contacts are provided by Asp832, Asp834, Asn836, Tyr838, Glu843, Asp868, Asp870, Asn872, and Glu879. The segment at 960–1214 (RVSFLTRTPG…GSYALIQLPS (255 aa)) is interaction with TXNDC11. A helical transmembrane segment spans residues 1011–1031 (IVCVTIFSAICAGLFADRAYY). The Extracellular segment spans residues 1032–1046 (YGFASPPTDIEETTY). A helical membrane pass occupies residues 1047-1067 (VGIILSRGTAASISFMFSYIL). Positions 1053 to 1235 (RGTAASISFM…YVGDKLVSLS (183 aa)) constitute a Ferric oxidoreductase domain. The Cytoplasmic segment spans residues 1068–1100 (LTMCRNLITFLRETFLNRYIPFDAAVDFHRWIA). The helical transmembrane segment at 1101–1121 (MAAVVLAVVHSLGHAVNVYIF) threads the bilayer. The Extracellular segment spans residues 1122–1154 (SVSPLSLMTCVFPSVFVNDGSKLPPKYYWWFFE). Residues 1155 to 1175 (TVPGMTGVLLLLVLAIMYVFA) form a helical membrane-spanning segment. The Cytoplasmic segment spans residues 1176–1185 (SHHFRRHSFR). Residues 1186–1206 (GFWLTHHLYVVLYALIIIHGS) form a helical membrane-spanning segment. Residue Tyr1207 is a topological domain, extracellular. The chain crosses the membrane as a helical span at residues 1208-1228 (ALIQLPSFHIYFLVPAIIYVG). Residues 1229-1517 (DKLVSLSRKK…AHFVHHYENF (289 aa)) lie on the Cytoplasmic side of the membrane. Residues 1236–1342 (RKKVEISVVK…DGPFGEGHQE (107 aa)) enclose the FAD-binding FR-type domain.

It in the N-terminal section; belongs to the peroxidase family. In terms of assembly, heterodimer with DUOXA2; disulfide-linked. Interacts with TXNDC11, TPO and CYBA. N-glycosylated. Expressed in colon, duodenum, rectum and thyroid.

It is found in the apical cell membrane. It localises to the cell junction. The enzyme catalyses NADH + O2 + H(+) = H2O2 + NAD(+). It catalyses the reaction NADPH + O2 + H(+) = H2O2 + NADP(+). It participates in hormone biosynthesis; thyroid hormone biosynthesis. The NADPH oxidase activity is calcium-dependent. Peroxidase activity is inhibited by aminobenzohydrazide. Functionally, generates hydrogen peroxide which is required for the activity of thyroid peroxidase/TPO and lactoperoxidase/LPO. Plays a role in thyroid hormones synthesis and lactoperoxidase-mediated antimicrobial defense at the surface of mucosa. May have its own peroxidase activity through its N-terminal peroxidase-like domain. This is Dual oxidase 2 (Duox2) from Rattus norvegicus (Rat).